The primary structure comprises 237 residues: HTH-type transcriptional regulator GmuR (237 aa).

The 69-residue stretch at 1–69 (MNKYEIIANE…RGHGTFIIQS (69 aa)) folds into the HTH gntR-type domain. Residues 29–48 (EVSLAKEFNSSRMTMKRALD) constitute a DNA-binding region (H-T-H motif).

The protein resides in the cytoplasm. Functionally, transcriptional repressor of the gmuBACDREFG operon which is involved in the uptake and degradation of glucomannan. The sequence is that of HTH-type transcriptional regulator GmuR (gmuR) from Bacillus subtilis (strain 168).